The primary structure comprises 187 residues: Accessory gene regulator protein B (187 aa).

5 helical membrane passes run Leu-49–Ile-69, Phe-82–Phe-102, Thr-107–Ala-127, Tyr-143–Tyr-163, and Thr-164–Ser-184.

This sequence belongs to the AgrB family.

It localises to the cell membrane. In terms of biological role, essential for the production of a quorum sensing system signal molecule, the autoinducing peptide (AIP). This quorum sensing system is responsible for the regulation of the expression of virulence factor genes. Involved in the proteolytic processing of AgrD, the precursor of AIP. The polypeptide is Accessory gene regulator protein B (Staphylococcus aureus (strain MRSA252)).